The sequence spans 689 residues: Small ribosomal subunit protein mS39 (689 aa).

The transit peptide at 1–37 (MAGVSAVRWLGLRSRLGQPLTGRRAGLCKQARSCRFY) directs the protein to the mitochondrion. Lysine 126 is modified (N6-acetyllysine). PPR repeat units follow at residues 149–183 (IKDI…GTTV), 184–219 (SLET…EALE), 255–289 (NAHS…RLHA), 290–330 (DVYT…KVKP), 331–367 (NLQT…GIEP), 368–404 (SLAT…MGKR), 412–446 (DDKF…DNWK), 454–488 (RNFY…VYFP), 489–523 (HSQT…GHTF), and 572–606 (PATS…NKIP). The disordered stretch occupies residues 665-689 (NLTALTSDSDTDSSSDSDSDTSEGK). The span at 673–689 (SDTDSSSDSDSDTSEGK) shows a compositional bias: acidic residues.

This sequence belongs to the mitochondrion-specific ribosomal protein mS39 family. In terms of assembly, component of the mitochondrial ribosome small subunit (28S) which comprises a 12S rRNA and about 30 distinct proteins. Associated with the 12S mitochondrial rRNA (12S mt-rRNA).

Its subcellular location is the mitochondrion. Mitochondrial RNA-binding protein that has a role in mitochondrial translation. This is Small ribosomal subunit protein mS39 (PTCD3) from Pongo abelii (Sumatran orangutan).